Consider the following 1113-residue polypeptide: Receptor-type guanylate cyclase gcy-18 (1113 aa).

An N-terminal signal peptide occupies residues 1 to 18; that stretch reads MLKTLLFILIFFNIPIIA. The Extracellular portion of the chain corresponds to 19–499; the sequence is IEEIPDIKEN…RGQRCSYLLE (481 aa). N-linked (GlcNAc...) asparagine glycans are attached at residues N72, N369, and N456. A helical membrane pass occupies residues 500–520; that stretch reads ISVGSLIILLILISVVFFFLF. The Cytoplasmic portion of the chain corresponds to 521–1113; the sequence is RYCENKQLEK…TNYIQNVEGV (593 aa). The 306-residue stretch at 543 to 848 folds into the Protein kinase domain; the sequence is IDEEQVKSMM…RVRLNTEMVL (306 aa). Positions 853–884 form a coiled coil; that stretch reads SLVDQMMKMMEQYANNLEKLVAERTGMLEEAN. In terms of domain architecture, Guanylate cyclase spans 918–1048; sequence TILFSDIVGF…DTVNVSSRME (131 aa). Mg(2+)-binding residues include D923, I924, and D967.

It belongs to the adenylyl cyclase class-4/guanylyl cyclase family. In terms of tissue distribution, expressed specifically in AFD sensory neurons.

The protein resides in the cell membrane. Its subcellular location is the cell projection. The protein localises to the cilium. It catalyses the reaction GTP = 3',5'-cyclic GMP + diphosphate. Guanylate cyclase involved in the production of the second messenger cGMP. Regulates thermotaxis responses in AFD sensory neurons. May regulate AFD neuronal activity such as calcium responses to temperature gradients. The protein is Receptor-type guanylate cyclase gcy-18 of Caenorhabditis elegans.